Here is an 817-residue protein sequence, read N- to C-terminus: Anaphase-promoting complex subunit 4 (817 aa).

Tyr-469 is subject to Phosphotyrosine. Residues Ser-757 and Ser-758 each carry the phosphoserine modification. A Glycyl lysine isopeptide (Lys-Gly) (interchain with G-Cter in SUMO2) cross-link involves residue Lys-772. Phosphoserine occurs at positions 777 and 779. Residue Lys-798 forms a Glycyl lysine isopeptide (Lys-Gly) (interchain with G-Cter in SUMO2) linkage.

It belongs to the APC4 family. In terms of assembly, the mammalian APC/C is composed at least of 14 distinct subunits ANAPC1, ANAPC2, CDC27/APC3, ANAPC4, ANAPC5, CDC16/APC6, ANAPC7, CDC23/APC8, ANAPC10, ANAPC11, CDC26/APC12, ANAPC13, ANAPC15 and ANAPC16 that assemble into a complex of at least 19 chains with a combined molecular mass of around 1.2 MDa; APC/C interacts with FZR1 and FBXO5. In the context of the APC/C complex, directly interacts with UBE2S.

It is found in the nucleus. The protein operates within protein modification; protein ubiquitination. Component of the anaphase promoting complex/cyclosome (APC/C), a cell cycle-regulated E3 ubiquitin ligase that controls progression through mitosis and the G1 phase of the cell cycle. The APC/C complex acts by mediating ubiquitination and subsequent degradation of target proteins: it mainly mediates the formation of 'Lys-11'-linked polyubiquitin chains and, to a lower extent, the formation of 'Lys-48'- and 'Lys-63'-linked polyubiquitin chains. The APC/C complex catalyzes assembly of branched 'Lys-11'-/'Lys-48'-linked branched ubiquitin chains on target proteins. In Pongo abelii (Sumatran orangutan), this protein is Anaphase-promoting complex subunit 4 (ANAPC4).